The chain runs to 365 residues: Cobalt-precorrin-5B C(1)-methyltransferase (365 aa).

Belongs to the CbiD family.

It carries out the reaction Co-precorrin-5B + S-adenosyl-L-methionine = Co-precorrin-6A + S-adenosyl-L-homocysteine. Its pathway is cofactor biosynthesis; adenosylcobalamin biosynthesis; cob(II)yrinate a,c-diamide from sirohydrochlorin (anaerobic route): step 6/10. Its function is as follows. Catalyzes the methylation of C-1 in cobalt-precorrin-5B to form cobalt-precorrin-6A. The protein is Cobalt-precorrin-5B C(1)-methyltransferase of Methanococcus maripaludis (strain C6 / ATCC BAA-1332).